The sequence spans 500 residues: ATP synthase subunit alpha, sodium ion specific (500 aa).

169–176 contributes to the ATP binding site; sequence GDRQTGKT.

Belongs to the ATPase alpha/beta chains family. In terms of assembly, F-type ATPases have 2 components, CF(1) - the catalytic core - and CF(0) - the membrane proton channel. CF(1) has five subunits: alpha(3), beta(3), gamma(1), delta(1), epsilon(1). CF(0) has three main subunits: a, b and c.

The protein localises to the cell membrane. It carries out the reaction 4 Na(+)(in) + ATP + H2O = 4 Na(+)(out) + ADP + phosphate + H(+). Produces ATP from ADP in the presence of a sodium ion gradient across the membrane. The alpha chain is a regulatory subunit. This Propionigenium modestum protein is ATP synthase subunit alpha, sodium ion specific.